Consider the following 150-residue polypeptide: 3-dehydroquinate dehydratase (150 aa).

Tyrosine 26 (proton acceptor) is an active-site residue. 3 residues coordinate substrate: asparagine 77, histidine 83, and aspartate 90. Residue histidine 103 is the Proton donor of the active site. Residues leucine 104–serine 105 and arginine 114 contribute to the substrate site.

This sequence belongs to the type-II 3-dehydroquinase family. In terms of assembly, homododecamer.

It carries out the reaction 3-dehydroquinate = 3-dehydroshikimate + H2O. Its pathway is metabolic intermediate biosynthesis; chorismate biosynthesis; chorismate from D-erythrose 4-phosphate and phosphoenolpyruvate: step 3/7. Its function is as follows. Catalyzes a trans-dehydration via an enolate intermediate. This Pectobacterium atrosepticum (strain SCRI 1043 / ATCC BAA-672) (Erwinia carotovora subsp. atroseptica) protein is 3-dehydroquinate dehydratase.